Here is a 69-residue protein sequence, read N- to C-terminus: RICYLAPRDTQICAPGQEICYLKSWDDGTGSIRGNRLEFGCAATCPTVKRGIHIKCCSTDKCNPHPKLA.

4 disulfides stabilise this stretch: C3–C20, C13–C41, C45–C56, and C57–C62.

Belongs to the three-finger toxin family. Long-chain subfamily. Type II alpha-neurotoxin sub-subfamily. As to expression, expressed by the venom gland.

Its subcellular location is the secreted. Its function is as follows. Binds with high affinity to muscular nicotinic acetylcholine receptors (nAChRs), whereas it binds with a low affinity to neuronal alpha-7/CHRNA7 nAChRs. The polypeptide is Toxin Lc b (Laticauda colubrina (Yellow-lipped sea krait)).